The sequence spans 314 residues: tRNA-cytidine(32) 2-sulfurtransferase (314 aa).

The PP-loop motif signature appears at 46-51; the sequence is SGGKDS. [4Fe-4S] cluster-binding residues include Cys121, Cys124, and Cys212.

Belongs to the TtcA family. As to quaternary structure, homodimer. Mg(2+) serves as cofactor. Requires [4Fe-4S] cluster as cofactor.

The protein resides in the cytoplasm. It carries out the reaction cytidine(32) in tRNA + S-sulfanyl-L-cysteinyl-[cysteine desulfurase] + AH2 + ATP = 2-thiocytidine(32) in tRNA + L-cysteinyl-[cysteine desulfurase] + A + AMP + diphosphate + H(+). It functions in the pathway tRNA modification. Catalyzes the ATP-dependent 2-thiolation of cytidine in position 32 of tRNA, to form 2-thiocytidine (s(2)C32). The sulfur atoms are provided by the cysteine/cysteine desulfurase (IscS) system. This Nitrosomonas europaea (strain ATCC 19718 / CIP 103999 / KCTC 2705 / NBRC 14298) protein is tRNA-cytidine(32) 2-sulfurtransferase.